The primary structure comprises 269 residues: Small ribosomal subunit protein eS1 (269 aa).

Disordered stretches follow at residues 1-20 and 249-269; these read MAVG…SKKK and AASG…QESV.

Belongs to the eukaryotic ribosomal protein eS1 family. Component of the small ribosomal subunit. Mature ribosomes consist of a small (40S) and a large (60S) subunit. The 40S subunit contains about 33 different proteins and 1 molecule of RNA (18S). The 60S subunit contains about 49 different proteins and 3 molecules of RNA (28S, 5.8S and 5S).

Its subcellular location is the cytoplasm. The chain is Small ribosomal subunit protein eS1 from Anopheles darlingi (Mosquito).